A 177-amino-acid polypeptide reads, in one-letter code: Protein SPMIP1 (177 aa).

The disordered stretch occupies residues 47 to 80; it reads SRLPRKLPTLLPQASVAPPPPASKTTPSKAPSPA.

The sequence is that of Protein SPMIP1 (Spmip1) from Mus musculus (Mouse).